The following is a 142-amino-acid chain: Large ribosomal subunit protein uL13 (142 aa).

This sequence belongs to the universal ribosomal protein uL13 family. In terms of assembly, part of the 50S ribosomal subunit.

Its function is as follows. This protein is one of the early assembly proteins of the 50S ribosomal subunit, although it is not seen to bind rRNA by itself. It is important during the early stages of 50S assembly. In Psychromonas ingrahamii (strain DSM 17664 / CCUG 51855 / 37), this protein is Large ribosomal subunit protein uL13.